A 218-amino-acid polypeptide reads, in one-letter code: Probable 2-aminoethanethiol dioxygenase (218 aa).

The cofactor is Fe cation.

It carries out the reaction cysteamine + O2 = hypotaurine + H(+). The polypeptide is Probable 2-aminoethanethiol dioxygenase (ado-1) (Dictyostelium discoideum (Social amoeba)).